We begin with the raw amino-acid sequence, 108 residues long: Integration host factor subunit alpha (108 aa).

Belongs to the bacterial histone-like protein family. As to quaternary structure, heterodimer of an alpha and a beta chain.

Functionally, this protein is one of the two subunits of integration host factor, a specific DNA-binding protein that functions in genetic recombination as well as in transcriptional and translational control. This is Integration host factor subunit alpha from Methylorubrum extorquens (strain CM4 / NCIMB 13688) (Methylobacterium extorquens).